A 203-amino-acid chain; its full sequence is MSQLTLTLLMIVAAYLAGSVSSAVLVCRMRGLPDPRSQGSGNPGATNVLRIGGASSAAMVLFFDMLKGALPTYLAYLMGIDAISLGLIAIAACLGHIYPIFFGFKGGKGVATAFGAMAPIGDDLAICLMASWVVLVLISRYSSLAAIITALLAPLYTWWLDDRFTIPVAMLSTLIIIRHKENIQRLLKGEESKVSRKKRPKAP.

Helical transmembrane passes span 6–26 (LTLLMIVAAYLAGSVSSAVLV), 82–102 (AISLGLIAIAACLGHIYPIFF), 118–138 (APIGDDLAICLMASWVVLVLI), and 141–161 (YSSLAAIITALLAPLYTWWLD).

Belongs to the PlsY family. Probably interacts with PlsX.

It is found in the cell inner membrane. The catalysed reaction is an acyl phosphate + sn-glycerol 3-phosphate = a 1-acyl-sn-glycero-3-phosphate + phosphate. The protein operates within lipid metabolism; phospholipid metabolism. In terms of biological role, catalyzes the transfer of an acyl group from acyl-phosphate (acyl-PO(4)) to glycerol-3-phosphate (G3P) to form lysophosphatidic acid (LPA). This enzyme utilizes acyl-phosphate as fatty acyl donor, but not acyl-CoA or acyl-ACP. This is Glycerol-3-phosphate acyltransferase from Shewanella sp. (strain MR-7).